Consider the following 1096-residue polypeptide: Protein EMBRYONIC FLOWER 1 (1096 aa).

8 disordered regions span residues 155 to 189 (KARG…EKLN), 274 to 296 (KTSG…VRGR), 315 to 348 (GATS…KGKQ), 366 to 420 (ETSQ…KKPV), 563 to 612 (LSRV…DIPM), 629 to 651 (DKEE…KNAL), 1007 to 1032 (DKEK…KNSS), and 1070 to 1096 (FKKK…TQNA). 2 short sequence motifs (nuclear localization signal) span residues 170-177 (SRKLVSPE) and 281-288 (IRKEESAL). Residues 281-294 (IRKEESALKKESVR) are compositionally biased toward basic and acidic residues. Over residues 315 to 337 (GATSENASKSCDSDQGNSESTDS) the composition is skewed to polar residues. The interval 337–617 (SGFDRTPFKG…DDIPMEIVEL (281 aa)) is DNA-binding. Basic and acidic residues predominate over residues 371–381 (GIKEHDADPSK). Over residues 382-394 (RSTPAHSLFTGND) the composition is skewed to polar residues. Positions 572-601 (SGADRKGKTVMVQEHHGAPRSQSHDRKETT) are enriched in basic and acidic residues. The interval 866–1096 (LDPRLRSTTP…KPVCPPTQNA (231 aa)) is DNA-binding. Residues 1018-1032 (SCNNNASAGPVKNSS) show a composition bias toward polar residues. The short motif at 1071–1078 (KKKPAVCK) is the Nuclear localization signal 3 element.

Interacts with MSI1. Expressed in mature embryo, root tips, cotyledons, leaves, stems, shoot apex, and flower clusters, with highest levels in flowers. The presence in the shoot apical meristem (SAM) is required to maintain vegetative development and prevent early flowering.

The protein resides in the nucleus. In terms of biological role, transcription repressor that regulates phase transition during shoot, flower and seeds development. Controls leaves development, shoot architecture and flowering by delaying both the vegetative to reproductive transition and flower initiation. Participates in polycomb group (PcG) protein complex-mediated (including EMF2) silencing of the flower homeotic genes AGAMOUS (AG), PISTILLATA (PI), and APETALA3 (AP3), as well as of some regulatory genes such as ABSCISIC ACID INSENSITIVE3 (ABI3), LONG VEGETATIVE PHASE1 (LOV1), and FLOWERING LOCUS C (FLC) during vegetative development. Required for histone methylation or for maintaining a stable histone methylation (e.g. H3K27me3) pattern of repressed target genes (including genes involved in salt stress response and flower development); this repression is counteracted by ULT1. Can bind non specifically DNA (both double- and single-stranded) and RNA. The sequence is that of Protein EMBRYONIC FLOWER 1 from Arabidopsis thaliana (Mouse-ear cress).